The following is a 206-amino-acid chain: Large ribosomal subunit protein uL4 (206 aa).

Residues 46 to 77 form a disordered region; sequence GTRAQKDREQVRHSTKKPFKQKGTGRARAGMT. The span at 58–70 shows a compositional bias: basic residues; that stretch reads HSTKKPFKQKGTG.

Belongs to the universal ribosomal protein uL4 family. In terms of assembly, part of the 50S ribosomal subunit.

Its function is as follows. One of the primary rRNA binding proteins, this protein initially binds near the 5'-end of the 23S rRNA. It is important during the early stages of 50S assembly. It makes multiple contacts with different domains of the 23S rRNA in the assembled 50S subunit and ribosome. In terms of biological role, forms part of the polypeptide exit tunnel. The chain is Large ribosomal subunit protein uL4 from Polaromonas naphthalenivorans (strain CJ2).